Here is a 162-residue protein sequence, read N- to C-terminus: Small ribosomal subunit protein bS16 (162 aa).

Positions 113 to 162 (ADGGPTTEATKPKKKSPAKKAAKAAEPAPQPEQPDTPALGGEQAELTAES) are disordered. Over residues 124-134 (PKKKSPAKKAA) the composition is skewed to basic residues.

It belongs to the bacterial ribosomal protein bS16 family.

The polypeptide is Small ribosomal subunit protein bS16 (Mycobacterium tuberculosis (strain ATCC 25177 / H37Ra)).